Here is a 448-residue protein sequence, read N- to C-terminus: Late embryogenesis abundant protein ECP63 (448 aa).

2 stretches are compositionally biased toward basic and acidic residues: residues 282–326 and 334–354; these read TEEA…EEAG and QKTR…KDSA. 2 disordered regions span residues 282 to 360 and 411 to 448; these read TEEA…RGNE and SKPG…KGKL. The stretch at 297-331 forms a coiled coil; the sequence is KENMEKAGEVTRQKMEEMRLEGKELKEEAGAKAQE. The segment covering 420 to 432 has biased composition (polar residues); sequence LKASDQMTGQTFN. Basic and acidic residues predominate over residues 435 to 448; the sequence is GRMDDDARKDKGKL.

It belongs to the LEA type 4 family. As to expression, expressed in mature seeds.

Functionally, may be involved in the BHLH109-mediated regulation of somatic embryogenesis. This chain is Late embryogenesis abundant protein ECP63, found in Arabidopsis thaliana (Mouse-ear cress).